We begin with the raw amino-acid sequence, 401 residues long: Glutamyl-tRNA reductase (401 aa).

Substrate is bound by residues 49–52 (TCNR), Ser-92, 97–99 (END), and Gln-103. The active-site Nucleophile is Cys-50. 171 to 176 (GNGKMA) serves as a coordination point for NADP(+).

Belongs to the glutamyl-tRNA reductase family. As to quaternary structure, homodimer.

The enzyme catalyses (S)-4-amino-5-oxopentanoate + tRNA(Glu) + NADP(+) = L-glutamyl-tRNA(Glu) + NADPH + H(+). The protein operates within porphyrin-containing compound metabolism; protoporphyrin-IX biosynthesis; 5-aminolevulinate from L-glutamyl-tRNA(Glu): step 1/2. Functionally, catalyzes the NADPH-dependent reduction of glutamyl-tRNA(Glu) to glutamate 1-semialdehyde (GSA). The sequence is that of Glutamyl-tRNA reductase from Picrophilus torridus (strain ATCC 700027 / DSM 9790 / JCM 10055 / NBRC 100828 / KAW 2/3).